Consider the following 525-residue polypeptide: WD repeat-containing protein JIP5 (525 aa).

WD repeat units follow at residues 28–69 (VFDE…RILN), 121–160 (RHKGSVRGMSFNNDGSKLYTIGIDNVLKKANSLTGKVMKK), 211–251 (HNGD…ESDA), 270–310 (QEDE…LVDQ), and 358–398 (RKHS…DDEE). The interval 396-525 (DEEGKINESY…EHGIRKFEGL (130 aa)) is disordered. Positions 410–424 (SDNDNGFDSDADSNS) are enriched in acidic residues. Positions 425–435 (DSESVSSSDVD) are enriched in low complexity. A compositionally biased stretch (basic and acidic residues) spans 463 to 484 (SKDELLAELEKDLQSSDEDSKH). A compositionally biased stretch (basic residues) spans 485–501 (YTKRTKSTQPKKLKKQK). The segment covering 513 to 525 (QKHEHGIRKFEGL) has biased composition (basic and acidic residues).

It belongs to the WD repeat WDR55 family.

It is found in the nucleus. Its subcellular location is the nucleolus. The polypeptide is WD repeat-containing protein JIP5 (JIP5) (Kluyveromyces lactis (strain ATCC 8585 / CBS 2359 / DSM 70799 / NBRC 1267 / NRRL Y-1140 / WM37) (Yeast)).